A 137-amino-acid chain; its full sequence is Small heat shock protein IbpA (137 aa).

One can recognise a sHSP domain in the interval 28-137 (SQSNGGYPPY…AKKPRRIEIN (110 aa)).

The protein belongs to the small heat shock protein (HSP20) family. In terms of assembly, monomer. Forms homomultimers of about 100-150 subunits at optimal growth temperatures. Conformation changes to monomers at high temperatures or high ionic concentrations.

It is found in the cytoplasm. Functionally, associates with aggregated proteins, together with IbpB, to stabilize and protect them from irreversible denaturation and extensive proteolysis during heat shock and oxidative stress. Aggregated proteins bound to the IbpAB complex are more efficiently refolded and reactivated by the ATP-dependent chaperone systems ClpB and DnaK/DnaJ/GrpE. Its activity is ATP-independent. This is Small heat shock protein IbpA from Shigella sonnei (strain Ss046).